The primary structure comprises 1361 residues: DNA-directed RNA polymerase subunit beta' (1361 aa).

4 residues coordinate Zn(2+): cysteine 69, cysteine 71, cysteine 84, and cysteine 87. Mg(2+) is bound by residues aspartate 460, aspartate 462, and aspartate 464. Residues cysteine 808, cysteine 882, cysteine 889, and cysteine 892 each coordinate Zn(2+).

This sequence belongs to the RNA polymerase beta' chain family. In terms of assembly, the RNAP catalytic core consists of 2 alpha, 1 beta, 1 beta' and 1 omega subunit. When a sigma factor is associated with the core the holoenzyme is formed, which can initiate transcription. Mg(2+) is required as a cofactor. It depends on Zn(2+) as a cofactor.

It carries out the reaction RNA(n) + a ribonucleoside 5'-triphosphate = RNA(n+1) + diphosphate. In terms of biological role, DNA-dependent RNA polymerase catalyzes the transcription of DNA into RNA using the four ribonucleoside triphosphates as substrates. The chain is DNA-directed RNA polymerase subunit beta' from Rickettsia bellii (strain RML369-C).